The chain runs to 324 residues: Fibronectin type III domain-containing protein 8 (324 aa).

The region spanning 179-280 (PDTPFIFEHT…KPYKFATLAT (102 aa)) is the Fibronectin type-III domain.

The sequence is that of Fibronectin type III domain-containing protein 8 (FNDC8) from Homo sapiens (Human).